We begin with the raw amino-acid sequence, 737 residues long: Polyribonucleotide nucleotidyltransferase (737 aa).

Mg(2+) is bound by residues Asp-489 and Asp-495. The 60-residue stretch at Pro-556–Ile-615 folds into the KH domain. An S1 motif domain is found at Asp-625–Lys-693. Positions Ser-691–Glu-737 are disordered. 2 stretches are compositionally biased toward basic and acidic residues: residues Pro-700 to Tyr-715 and Pro-725 to Glu-737.

This sequence belongs to the polyribonucleotide nucleotidyltransferase family. Mg(2+) is required as a cofactor.

It localises to the cytoplasm. The catalysed reaction is RNA(n+1) + phosphate = RNA(n) + a ribonucleoside 5'-diphosphate. Involved in mRNA degradation. Catalyzes the phosphorolysis of single-stranded polyribonucleotides processively in the 3'- to 5'-direction. The polypeptide is Polyribonucleotide nucleotidyltransferase (Streptococcus pneumoniae (strain Hungary19A-6)).